A 234-amino-acid chain; its full sequence is Probable pectate lyase F (234 aa).

The N-terminal stretch at 1-17 is a signal peptide; sequence MWSSIAAFPVLVPVALA.

Belongs to the polysaccharide lyase 3 family. Ca(2+) is required as a cofactor.

It localises to the secreted. It carries out the reaction Eliminative cleavage of (1-&gt;4)-alpha-D-galacturonan to give oligosaccharides with 4-deoxy-alpha-D-galact-4-enuronosyl groups at their non-reducing ends.. Pectinolytic enzyme consist of four classes of enzymes: pectin lyase, polygalacturonase, pectin methylesterase and rhamnogalacturonase. Among pectinolytic enzymes, pectin lyase is the most important in depolymerization of pectin, since it cleaves internal glycosidic bonds of highly methylated pectins. Favors pectate, the anion, over pectin, the methyl ester. The chain is Probable pectate lyase F (plyF) from Aspergillus fumigatus (strain ATCC MYA-4609 / CBS 101355 / FGSC A1100 / Af293) (Neosartorya fumigata).